A 601-amino-acid chain; its full sequence is ATP-dependent lipid A-core flippase (601 aa).

A run of 6 helical transmembrane segments spans residues 35–55 (FAVAMVCMLIAGALTSSLAFL), 77–97 (LAIILIYLVKGGCSYFQAILM), 150–170 (AVTSLMKDSFTLICLVFVIFY), 173–193 (WQLAIIAMIVFPLTIYPIAKF), 263–283 (MEFLGGIGIAAIIFYGGYQVI), and 286–306 (SSTPGTFFSFLTALIMLYEPV). In terms of domain architecture, ABC transmembrane type-1 spans 36–318 (AVAMVCMLIA…LTNVNNTIQQ (283 aa)). The ABC transporter domain occupies 352–585 (IEIRNISFAY…RGEYYKLHQL (234 aa)). 384 to 391 (GMSGGGKT) lines the ATP pocket.

Belongs to the ABC transporter superfamily. Lipid exporter (TC 3.A.1.106) family. Homodimer.

Its subcellular location is the cell inner membrane. It catalyses the reaction ATP + H2O + lipid A-core oligosaccharideSide 1 = ADP + phosphate + lipid A-core oligosaccharideSide 2.. In terms of biological role, involved in lipopolysaccharide (LPS) biosynthesis. Translocates lipid A-core from the inner to the outer leaflet of the inner membrane. Transmembrane domains (TMD) form a pore in the inner membrane and the ATP-binding domain (NBD) is responsible for energy generation. The polypeptide is ATP-dependent lipid A-core flippase (Syntrophus aciditrophicus (strain SB)).